A 474-amino-acid chain; its full sequence is Trehalose-6-phosphate synthase (474 aa).

Arg10 contacts D-glucose 6-phosphate. Residue 22–23 (GG) participates in UDP-alpha-D-glucose binding. D-glucose 6-phosphate contacts are provided by Tyr77 and Asp131. Residues Arg263 and Lys268 each contribute to the UDP-alpha-D-glucose site. Arg301 is a binding site for D-glucose 6-phosphate. UDP-alpha-D-glucose-binding positions include Phe340 and 366–370 (LVAKE).

It belongs to the glycosyltransferase 20 family. Homotetramer.

The enzyme catalyses D-glucose 6-phosphate + UDP-alpha-D-glucose = alpha,alpha-trehalose 6-phosphate + UDP + H(+). Its pathway is glycan biosynthesis; trehalose biosynthesis. Probably involved in the osmoprotection via the biosynthesis of trehalose. Catalyzes the transfer of glucose from UDP-alpha-D-glucose (UDP-Glc) to D-glucose 6-phosphate (Glc-6-P) to form trehalose-6-phosphate. Acts with retention of the anomeric configuration of the UDP-sugar donor. The sequence is that of Trehalose-6-phosphate synthase from Cronobacter sakazakii (strain ATCC BAA-894) (Enterobacter sakazakii).